Consider the following 557-residue polypeptide: Probable WRKY transcription factor 20 (557 aa).

The segment covering 1-12 (MNPQANDRKEFQ) has biased composition (basic and acidic residues). 2 disordered regions span residues 1-36 (MNPQ…GGGA) and 76-215 (KPEP…DGYN). Over residues 95–114 (SASSSSYTGRGFHQNTFTEQ) the composition is skewed to polar residues. Positions 151-169 (SSHSPSSISDAAGSSSELS) are enriched in low complexity. Over residues 193-207 (SIQTSQNDSRGSTPS) the composition is skewed to polar residues. Positions 205–269 (TPSILADDGY…YKGTHDHPKP (65 aa)) form a DNA-binding region, WRKY 1. 4 residues coordinate Zn(2+): C236, C241, H264, and H266. The tract at residues 257-348 (DIIYKGTHDH…PDDDDPFSKR (92 aa)) is disordered. Residues 282-299 (QEERLDKYPSSTGRDEKG) are compositionally biased toward basic and acidic residues. Residues 303-314 (YNLSNPNEQTGN) are compositionally biased toward polar residues. Low complexity predominate over residues 321 to 332 (SASDDGGEAAAS). Residues 375–440 (SEVDILDDGY…YEGKHDHDVP (66 aa)) constitute a DNA-binding region (WRKY 2). 4 residues coordinate Zn(2+): C406, C411, H435, and H437. Disordered stretches follow at residues 433–486 (GKHD…QHQN) and 520–557 (NQYG…QSGP). Over residues 520-536 (NQYGQRETKNETQNGDI) the composition is skewed to polar residues.

The protein belongs to the WRKY group I family.

It localises to the nucleus. Its function is as follows. Transcription factor. Interacts specifically with the W box (5'-(T)TGAC[CT]-3'), a frequently occurring elicitor-responsive cis-acting element. In Arabidopsis thaliana (Mouse-ear cress), this protein is Probable WRKY transcription factor 20 (WRKY20).